The sequence spans 736 residues: Ethylene receptor 2 (736 aa).

The next 3 helical transmembrane spans lie at 22 to 42 (ISDFFIAVAYFSIPIELVYFV), 53 to 73 (VLVQFGAFIVLCGATHLINLW), and 94 to 114 (AAVSCATAVMLVHIIPDLLSV). Cu cation-binding residues include Cys64 and His68. Positions 157-305 (DRHTILKTTL…VVADQVAVAL (149 aa)) constitute a GAF domain. The 238-residue stretch at 348–585 (VMNHEMRTPM…TAIFIVKLGI (238 aa)) folds into the Histidine kinase domain. Residue His351 is modified to Phosphohistidine; by autocatalysis. Residues 613 to 730 (KVLVMDDNGF…KMRSVLSGLL (118 aa)) enclose the Response regulatory domain. Asp661 is modified (4-aspartylphosphate).

The protein belongs to the ethylene receptor family. In terms of assembly, homodimer; disulfide-linked. Cu cation is required as a cofactor. In terms of processing, activation probably requires a transfer of a phosphate group between a His in the transmitter domain and an Asp of the receiver domain. As to expression, leaves, flowers and fruits.

The protein localises to the endoplasmic reticulum membrane. The catalysed reaction is ATP + protein L-histidine = ADP + protein N-phospho-L-histidine.. In terms of biological role, may act early in the ethylene signal transduction pathway, possibly as an ethylene receptor, or as a regulator of the pathway. In Solanum lycopersicum (Tomato), this protein is Ethylene receptor 2 (ETR2).